Consider the following 1104-residue polypeptide: DNA polymerase delta catalytic subunit (1104 aa).

Positions 1–60 (MKRSIVTGGGNNDKKFKAQPPPKNNYRGGGDDEEDDEFEEDDDEDEGDEFGEEEDEDDID) are disordered. Positions 31-60 (DDEEDDEFEEDDDEDEGDEFGEEEDEDDID) are enriched in acidic residues. Positions 1012, 1015, 1027, and 1030 each coordinate Zn(2+). A CysA-type zinc finger spans residues 1012 to 1030 (CMNCPKELTDTESTTCINC). [4Fe-4S] cluster-binding residues include C1059, C1062, C1072, and C1077. Positions 1059–1077 (CQRCSGSLHQPVLCSNRDC) match the CysB motif motif.

It belongs to the DNA polymerase type-B family. Heterotetramer composed of subunits of 125 kDa, 50 kDa, 66 kDa and 12 kDa. The 125 kDa subunit contains the polymerase active site and most likely the active site for the 3'-5' exonuclease activity. It depends on [4Fe-4S] cluster as a cofactor.

Its subcellular location is the nucleus. It carries out the reaction DNA(n) + a 2'-deoxyribonucleoside 5'-triphosphate = DNA(n+1) + diphosphate. Possesses two enzymatic activities: DNA synthesis (polymerase) and an exonucleolytic activity that degrades single stranded DNA in the 3'- to 5'-direction. This chain is DNA polymerase delta catalytic subunit (pold1), found in Dictyostelium discoideum (Social amoeba).